The sequence spans 202 residues: uncharacterized protein (202 aa).

The interval 118–202 is disordered; the sequence is SSVSPVSSKK…KVSGTKKVKA (85 aa). The residue at position 121 (serine 121) is a Phosphoserine. Basic residues-rich tracts occupy residues 142–163 and 186–202; these read EKSK…KSKR and SSKS…KVKA.

The protein localises to the nucleus. It localises to the nucleolus. This is an uncharacterized protein from Schizosaccharomyces pombe (strain 972 / ATCC 24843) (Fission yeast).